Consider the following 570-residue polypeptide: Proline--tRNA ligase (570 aa).

It belongs to the class-II aminoacyl-tRNA synthetase family. ProS type 1 subfamily. In terms of assembly, homodimer.

The protein resides in the cytoplasm. The enzyme catalyses tRNA(Pro) + L-proline + ATP = L-prolyl-tRNA(Pro) + AMP + diphosphate. Its function is as follows. Catalyzes the attachment of proline to tRNA(Pro) in a two-step reaction: proline is first activated by ATP to form Pro-AMP and then transferred to the acceptor end of tRNA(Pro). As ProRS can inadvertently accommodate and process non-cognate amino acids such as alanine and cysteine, to avoid such errors it has two additional distinct editing activities against alanine. One activity is designated as 'pretransfer' editing and involves the tRNA(Pro)-independent hydrolysis of activated Ala-AMP. The other activity is designated 'posttransfer' editing and involves deacylation of mischarged Ala-tRNA(Pro). The misacylated Cys-tRNA(Pro) is not edited by ProRS. In Acidithiobacillus ferrooxidans (strain ATCC 23270 / DSM 14882 / CIP 104768 / NCIMB 8455) (Ferrobacillus ferrooxidans (strain ATCC 23270)), this protein is Proline--tRNA ligase.